Consider the following 363-residue polypeptide: NAD(P)H-quinone oxidoreductase subunit 1, chloroplastic (363 aa).

Transmembrane regions (helical) follow at residues 30 to 50 (LIPI…IVWL), 104 to 124 (IAVI…HLVL), 127 to 147 (LSIG…GLLM), 248 to 268 (YSGI…LVSS), 300 to 320 (VFGT…FLFI), and 343 to 363 (FLLP…LISL).

The protein belongs to the complex I subunit 1 family. NDH is composed of at least 16 different subunits, 5 of which are encoded in the nucleus.

The protein localises to the plastid. It is found in the chloroplast thylakoid membrane. The enzyme catalyses a plastoquinone + NADH + (n+1) H(+)(in) = a plastoquinol + NAD(+) + n H(+)(out). The catalysed reaction is a plastoquinone + NADPH + (n+1) H(+)(in) = a plastoquinol + NADP(+) + n H(+)(out). NDH shuttles electrons from NAD(P)H:plastoquinone, via FMN and iron-sulfur (Fe-S) centers, to quinones in the photosynthetic chain and possibly in a chloroplast respiratory chain. The immediate electron acceptor for the enzyme in this species is believed to be plastoquinone. Couples the redox reaction to proton translocation, and thus conserves the redox energy in a proton gradient. The chain is NAD(P)H-quinone oxidoreductase subunit 1, chloroplastic from Lactuca sativa (Garden lettuce).